A 752-amino-acid chain; its full sequence is Endo-1,4-beta-xylanase 3 (752 aa).

Positions 1–22 (MEKNTNTNHTSDDNNDKNHTNE) are disordered. Basic and acidic residues predominate over residues 10–22 (TSDDNNDKNHTNE). 2 CBM-cenC domains span residues 26–163 (KIIL…EGPP) and 197–344 (NIVE…VQGP). The 296-residue stretch at 397 to 692 (FPYIVKVKQT…NEAGKRFLEV (296 aa)) folds into the GH10 domain. The Proton donor role is filled by E526. The Nucleophile role is filled by E627.

The protein belongs to the glycosyl hydrolase 10 (cellulase F) family. As to expression, confined to immature xylems.

The catalysed reaction is Endohydrolysis of (1-&gt;4)-beta-D-xylosidic linkages in xylans.. The protein operates within glycan degradation; xylan degradation. Its function is as follows. Binds to and hydrolyzes insoluble and soluble xylan substrates. In Arabidopsis thaliana (Mouse-ear cress), this protein is Endo-1,4-beta-xylanase 3.